Reading from the N-terminus, the 4644-residue chain is Cytoplasmic dynein 1 heavy chain 1 (4644 aa).

Serine 2 is subject to N-acetylserine. The tract at residues serine 2–asparagine 1865 is stem. 4 coiled-coil regions span residues alanine 48–aspartate 69, serine 179–isoleucine 200, alanine 453–alanine 476, and threonine 541–alanine 564. Serine 68 carries the post-translational modification Phosphoserine. Residues methionine 446–alanine 701 form an interaction with DYNC1I2 region. The interval alanine 649–serine 800 is interaction with DYNC1LI2. Lysine 1123 is modified (N6-acetyllysine). The stretch at threonine 1169–glutamine 1201 forms a coiled coil. At serine 1228 the chain carries Phosphoserine. 2 coiled-coil regions span residues alanine 1229–serine 1250 and arginine 1355–phenylalanine 1371. AAA stretches follow at residues tyrosine 1866–serine 2097, glutamate 2178–leucine 2450, glutamate 2554–glycine 2803, and valine 2897–threonine 3166. Residues glycine 1904 to threonine 1911 and glycine 2222 to serine 2229 contribute to the ATP site. A disordered region spans residues glutamate 2389–proline 2409. Residues glycine 2593–threonine 2600 and glycine 2935–threonine 2942 each bind ATP. Coiled coils occupy residues glutamate 3187–glutamine 3273, alanine 3394–methionine 3498, and glutamate 3735–glutamine 3798. The interval glutamate 3187–methionine 3498 is stalk. Lysine 3478 bears the N6-acetyllysine mark. AAA regions lie at residues leucine 3551 to arginine 3780 and alanine 4003 to threonine 4219. Serine 4160 is subject to Phosphoserine. Lysine 4281 carries the post-translational modification N6-acetyllysine. Residue threonine 4364 is modified to Phosphothreonine.

The protein belongs to the dynein heavy chain family. As to quaternary structure, homodimer. The cytoplasmic dynein 1 complex consists of two catalytic heavy chains (HCs) and a number of non-catalytic subunits presented by intermediate chains (ICs), light intermediate chains (LICs) and light chains (LCs); the composition seems to vary in respect to the IC, LIC and LC composition. The heavy chain homodimer serves as a scaffold for the probable homodimeric assembly of the respective non-catalytic subunits. The ICs and LICs bind directly to the HC dimer and dynein LCs assemble on the IC dimer. Interacts with DYNC1LI1; DYNC1LI1 and DYNC1LI2 bind mutually exclusive to DYNC1H1. Interacts with DYNC1LI2; DYNC1LI1 and DYNC1LI2 bind mutually exclusive to DYNC1H1. Interacts with DYNC1I2. Interacts with BICD2. Interacts with DNALI1.

The protein localises to the cytoplasm. It is found in the cytoskeleton. Its function is as follows. Cytoplasmic dynein 1 acts as a motor for the intracellular retrograde motility of vesicles and organelles along microtubules. Dynein has ATPase activity; the force-producing power stroke is thought to occur on release of ADP. Plays a role in mitotic spindle assembly and metaphase plate congression. In Rattus norvegicus (Rat), this protein is Cytoplasmic dynein 1 heavy chain 1 (Dync1h1).